Reading from the N-terminus, the 716-residue chain is Polyribonucleotide nucleotidyltransferase (716 aa).

Residues aspartate 495 and aspartate 501 each contribute to the Mg(2+) site. The KH domain maps to 562–621 (PRLFRIQINPEQIGLVIGPGGKTIRSITEQTGAKIDIEDTGAVTISAVDADSALRAKSII). The 69-residue stretch at 631–699 (GDVYIGKVTR…QKGRVNLTRK (69 aa)) folds into the S1 motif domain.

The protein belongs to the polyribonucleotide nucleotidyltransferase family. Mg(2+) serves as cofactor.

The protein resides in the cytoplasm. It catalyses the reaction RNA(n+1) + phosphate = RNA(n) + a ribonucleoside 5'-diphosphate. In terms of biological role, involved in mRNA degradation. Catalyzes the phosphorolysis of single-stranded polyribonucleotides processively in the 3'- to 5'-direction. The sequence is that of Polyribonucleotide nucleotidyltransferase from Synechococcus sp. (strain ATCC 27144 / PCC 6301 / SAUG 1402/1) (Anacystis nidulans).